The chain runs to 561 residues: MSTQWWKESVVYQIYPRSFQDYNGDGIGDIPGIISRLDYLKTLGVDVIWLSPVYDSPNDDNGYDIRDYKAIMDEFGTMADWETLLAEIHTRGMKLIMDLVVNHSSDEHAWFVESRKSKDNPYRDFYIWRPGKDGKEPNNWASNFSGSAWTYDETTGEYYLHLFSKKQPDLNWENPKLREKIYEMMTWWLDKGIDGFRMDVINFISKVDGLPDAEPQPGQPYVSGSNYFMNGPNIHTYLQEMHENVLQHYDLMTVGEMPGVTLELAQLYTGEERNELNMVFQFEHVGLDQGPNGKWDLKPLELKDLKASLSRWQKGLQDIGWNSLYWNNHDQPRIVSRFGDDQSYRVESAKMLATLLHCMKGTPFIYQGEEIGMTNVRFDSIEQYQDIETLNMYKEKRAQGVPHETLMASIHAKGRDNARTPMQWDETKHGGFTDGTPWLEVNPNYKEINVKQALKDPNSIFYHYQKLIQLRKEHAILVHGSYDLILEDDPEIFAYKRTYNGQTLLVVCNFYGRITDFECPAEVVLSEPTLLLSNYDEEENGSYTSFRLRPYEARVYLGKNE.

Aspartate 199 (nucleophile) is an active-site residue. Catalysis depends on glutamate 256, which acts as the Proton donor.

The protein belongs to the glycosyl hydrolase 13 family.

The protein resides in the cytoplasm. It catalyses the reaction Hydrolysis of (1-&gt;6)-alpha-D-glucosidic linkages in some oligosaccharides produced from starch and glycogen by alpha-amylase, and in isomaltose.. This chain is Oligo-1,6-glucosidase (malL), found in Halalkalibacterium halodurans (strain ATCC BAA-125 / DSM 18197 / FERM 7344 / JCM 9153 / C-125) (Bacillus halodurans).